A 1252-amino-acid chain; its full sequence is ATP-dependent helicase/nuclease subunit A (1252 aa).

Positions 6–489 constitute a UvrD-like helicase ATP-binding domain; that stretch reads TNWTEEQKEA…VLLYKNFRSR (484 aa). Residue 27 to 34 participates in ATP binding; the sequence is AAAGSGKT. A UvrD-like helicase C-terminal domain is found at 523-811; it reads ANYEEIEENL…RIMSIHKSKG (289 aa).

The protein belongs to the helicase family. AddA subfamily. Heterodimer of AddA and AddB/RexB. The cofactor is Mg(2+).

The enzyme catalyses Couples ATP hydrolysis with the unwinding of duplex DNA by translocating in the 3'-5' direction.. The catalysed reaction is ATP + H2O = ADP + phosphate + H(+). The heterodimer acts as both an ATP-dependent DNA helicase and an ATP-dependent, dual-direction single-stranded exonuclease. Recognizes the chi site generating a DNA molecule suitable for the initiation of homologous recombination. The AddA nuclease domain is required for chi fragment generation; this subunit has the helicase and 3' -&gt; 5' nuclease activities. The polypeptide is ATP-dependent helicase/nuclease subunit A (Clostridium acetobutylicum (strain ATCC 824 / DSM 792 / JCM 1419 / IAM 19013 / LMG 5710 / NBRC 13948 / NRRL B-527 / VKM B-1787 / 2291 / W)).